The following is a 518-amino-acid chain: Gypsy retrotransposon integrase-like protein 1 (518 aa).

In terms of domain architecture, Integrase catalytic spans 130–292; the sequence is QQHLPMVGNP…TPYFQMFNRN (163 aa). Residue Ser-498 is modified to Phosphoserine.

In Mus musculus (Mouse), this protein is Gypsy retrotransposon integrase-like protein 1 (Gin1).